A 168-amino-acid chain; its full sequence is Endoribonuclease YbeY (168 aa).

Zn(2+) is bound by residues H132, H136, and H142.

Belongs to the endoribonuclease YbeY family. The cofactor is Zn(2+).

It localises to the cytoplasm. In terms of biological role, single strand-specific metallo-endoribonuclease involved in late-stage 70S ribosome quality control and in maturation of the 3' terminus of the 16S rRNA. This is Endoribonuclease YbeY from Clostridium perfringens (strain ATCC 13124 / DSM 756 / JCM 1290 / NCIMB 6125 / NCTC 8237 / Type A).